We begin with the raw amino-acid sequence, 332 residues long: 4-hydroxy-3-methylbut-2-enyl diphosphate reductase (332 aa).

Residue C34 coordinates [4Fe-4S] cluster. H63 and H96 together coordinate (2E)-4-hydroxy-3-methylbut-2-enyl diphosphate. Dimethylallyl diphosphate contacts are provided by H63 and H96. The isopentenyl diphosphate site is built by H63 and H96. A [4Fe-4S] cluster-binding site is contributed by C118. H146 contributes to the (2E)-4-hydroxy-3-methylbut-2-enyl diphosphate binding site. H146 contributes to the dimethylallyl diphosphate binding site. H146 contacts isopentenyl diphosphate. The active-site Proton donor is the E148. (2E)-4-hydroxy-3-methylbut-2-enyl diphosphate is bound at residue T186. C216 lines the [4Fe-4S] cluster pocket. The (2E)-4-hydroxy-3-methylbut-2-enyl diphosphate site is built by S244, S245, N246, and S289. Dimethylallyl diphosphate contacts are provided by S244, S245, N246, and S289. S244, S245, N246, and S289 together coordinate isopentenyl diphosphate.

This sequence belongs to the IspH family. Requires [4Fe-4S] cluster as cofactor.

The enzyme catalyses isopentenyl diphosphate + 2 oxidized [2Fe-2S]-[ferredoxin] + H2O = (2E)-4-hydroxy-3-methylbut-2-enyl diphosphate + 2 reduced [2Fe-2S]-[ferredoxin] + 2 H(+). It carries out the reaction dimethylallyl diphosphate + 2 oxidized [2Fe-2S]-[ferredoxin] + H2O = (2E)-4-hydroxy-3-methylbut-2-enyl diphosphate + 2 reduced [2Fe-2S]-[ferredoxin] + 2 H(+). It functions in the pathway isoprenoid biosynthesis; dimethylallyl diphosphate biosynthesis; dimethylallyl diphosphate from (2E)-4-hydroxy-3-methylbutenyl diphosphate: step 1/1. Its pathway is isoprenoid biosynthesis; isopentenyl diphosphate biosynthesis via DXP pathway; isopentenyl diphosphate from 1-deoxy-D-xylulose 5-phosphate: step 6/6. Functionally, catalyzes the conversion of 1-hydroxy-2-methyl-2-(E)-butenyl 4-diphosphate (HMBPP) into a mixture of isopentenyl diphosphate (IPP) and dimethylallyl diphosphate (DMAPP). Acts in the terminal step of the DOXP/MEP pathway for isoprenoid precursor biosynthesis. The polypeptide is 4-hydroxy-3-methylbut-2-enyl diphosphate reductase (Mycobacterium leprae (strain TN)).